Consider the following 526-residue polypeptide: Delayed-rectifier potassium channel regulatory subunit KCNS1 (526 aa).

At 1–217 the chain is on the cytoplasmic side; sequence MLMLLVRGTH…LTMENPGYSL (217 aa). A helical membrane pass occupies residues 218–239; it reads PSKLFSCVSISVVLASIAAMCI. The Extracellular segment spans residues 240–270; it reads HSLPEYQAREAAAAVAAVAAGRSPEGVRDDP. The chain crosses the membrane as a helical span at residues 271-293; that stretch reads VLRRLEYFCIAWFSFEVSSRLLL. The Cytoplasmic segment spans residues 294–304; the sequence is APSTRNFFCHP. The chain crosses the membrane as a helical span at residues 305–322; the sequence is LNLIDIVSVLPFYLTLLA. At 323 to 337 the chain is on the extracellular side; sequence GVALGDQGGKEFGHL. A helical; Voltage-sensor transmembrane segment spans residues 338 to 358; the sequence is GKVVQVFRLMRIFRVLKLARH. The Cytoplasmic portion of the chain corresponds to 359 to 373; sequence STGLRSLGATLKHSY. The chain crosses the membrane as a helical span at residues 374–395; it reads REVGILLLYLAVGVSVFSGVAY. The Extracellular segment spans residues 396–408; it reads TAEKEEDVGFNTI. An intramembrane region (helical) is located at residues 409-420; the sequence is PACWWWGTVSMT. The Selectivity filter motif lies at 421-426; sequence TVGYGD. The stretch at 421–428 is an intramembrane region; sequence TVGYGDVV. Over 429–435 the chain is Extracellular; that stretch reads PVTVAGK. A helical transmembrane segment spans residues 436–464; it reads LAASGCILGGILVVALPITIIFNKFSHFY. The Cytoplasmic portion of the chain corresponds to 465–526; sequence RRQKALEAAV…PSEPPHPQMY (62 aa). Positions 491–526 are disordered; the sequence is GVSEASLETSRETSQEGRSADLESQAPSEPPHPQMY. Positions 499–511 are enriched in basic and acidic residues; that stretch reads TSRETSQEGRSAD.

It belongs to the potassium channel family. S (TC 1.A.1.2) subfamily. Kv9.1/KCNS1 sub-subfamily. As to quaternary structure, heterotetramer with KCNB1. Heterotetramer with KCNB2. Does not form homomultimers.

The protein localises to the cell membrane. Its function is as follows. Potassium channel regulatory subunit that modulate the delayed rectifier voltage-gated potassium channel activity of KCNB1 and KCNB2 by altering their kinetics, expression levels, and shifting the half-inactivation potential to more polarized values. While it does not form functional channels on its own, it can form functional heterotetrameric channels with KCNB1 and KCNB2. Each regulatory subunit has unique regulatory properties that can lead to extensive inhibition, significant changes in kinetics, and/or substantial shifts in the voltage dependencies of the inactivation process. The chain is Delayed-rectifier potassium channel regulatory subunit KCNS1 from Pan troglodytes (Chimpanzee).